A 206-amino-acid chain; its full sequence is Carbonic anhydrase (206 aa).

Lys11 is covalently cross-linked (Isoglutamyl lysine isopeptide (Lys-Gln) (interchain with Q-Cter in protein Pup)). Cys51, Asp53, His104, and Cys107 together coordinate Zn(2+).

The protein belongs to the beta-class carbonic anhydrase family. Homotetramer. Zn(2+) is required as a cofactor.

It carries out the reaction hydrogencarbonate + H(+) = CO2 + H2O. Catalyzes the reversible hydration of carbon dioxide to form bicarbonate. This Mycolicibacterium smegmatis (strain ATCC 700084 / mc(2)155) (Mycobacterium smegmatis) protein is Carbonic anhydrase (cynT).